The following is a 551-amino-acid chain: Membrane protein insertase YidC (551 aa).

The chain crosses the membrane as a helical span at residues 3–23 (ANHIRILLLVTIAIMFISLMG). Over residues 33–47 (NTKQQTSATQNNSHY) the composition is skewed to polar residues. A disordered region spans residues 33–59 (NTKQQTSATQNNSHYDNADSSTNTDVT). The span at 50–59 (ADSSTNTDVT) shows a compositional bias: low complexity. A run of 3 helical transmembrane segments spans residues 361 to 381 (LVGN…LIFY), 431 to 451 (LSGC…YWVL), and 504 to 524 (VMMF…SGLV).

It belongs to the OXA1/ALB3/YidC family. Type 1 subfamily. In terms of assembly, interacts with the Sec translocase complex via SecD. Specifically interacts with transmembrane segments of nascent integral membrane proteins during membrane integration.

Its subcellular location is the cell inner membrane. Its function is as follows. Required for the insertion and/or proper folding and/or complex formation of integral membrane proteins into the membrane. Involved in integration of membrane proteins that insert both dependently and independently of the Sec translocase complex, as well as at least some lipoproteins. Aids folding of multispanning membrane proteins. The chain is Membrane protein insertase YidC from Francisella tularensis subsp. mediasiatica (strain FSC147).